Reading from the N-terminus, the 190-residue chain is Potassium-transporting ATPase KdpC subunit (190 aa).

Residues 13–33 (VGFLLLTLMCGVVYPGIVTIF) traverse the membrane as a helical segment.

This sequence belongs to the KdpC family. As to quaternary structure, the system is composed of three essential subunits: KdpA, KdpB and KdpC.

The protein localises to the cell membrane. Part of the high-affinity ATP-driven potassium transport (or Kdp) system, which catalyzes the hydrolysis of ATP coupled with the electrogenic transport of potassium into the cytoplasm. This subunit acts as a catalytic chaperone that increases the ATP-binding affinity of the ATP-hydrolyzing subunit KdpB by the formation of a transient KdpB/KdpC/ATP ternary complex. The sequence is that of Potassium-transporting ATPase KdpC subunit from Listeria monocytogenes serotype 4b (strain CLIP80459).